A 911-amino-acid polypeptide reads, in one-letter code: Viral IRF4-like protein (911 aa).

A DNA-binding region (IRF tryptophan pentad repeat) is located at residues 7-114 (SEWATLWIID…GSYVVWQLVR (108 aa)). 4 disordered regions span residues 147–184 (TTAT…PRKS), 211–302 (ASTS…SRLP), 494–537 (GGAP…PYVC), and 681–727 (ELQE…FFDP). Positions 211-221 (ASTSGMGSSGT) are enriched in low complexity. 2 stretches are compositionally biased toward polar residues: residues 222–231 (RQVTQASSFT) and 495–505 (GAPNQGLSHTQ). Over residues 697-710 (RRPRSRSPHGRRTP) the composition is skewed to basic residues.

The protein belongs to the IRF family. As to quaternary structure, interacts with host MDM2; this interaction facilitates the proteasomal degradation of TP53/p53. Interacts with host IRF7; this interaction prevents IRF7 dimerization and subsequent activation.

Its subcellular location is the host nucleus. In terms of biological role, plays a role in host cell apoptosis modulation by promoting TP53/p53 ubiquitination and subsequent degradation and thus down-regulating TP53/p53-mediated apoptosis. Works as a potential viral transcription factor to modulate host gene expression to build favorable environments for the viral lytic life cycle and greatly accelerates the induction of an immediate early gene RTA, early genes ORF36 and ORF57, late genes ORF25 and ORF64, and latent genes LANA1 and v-IRF3. Inhibits host interferon-alpha production by interacting with host IRF7 and preventing IRF7 dimerization. This is Viral IRF4-like protein (vIRF-4) from Homo sapiens (Human).